Consider the following 424-residue polypeptide: MLFTIEQLELIKKLQHTGMSSDQLLKAFGELEVPEQLQNNNTIAAALYSPLLVQHLTTPKSETPVKLTVQTVPTPVKSEPQSSNCSSPFEHPICSNAPRPIRSQRTPMKEITTLDDPNELEEFMKQGEEACILDMKTFITQYSLRQTTVAMMTGVSQPYISKLLNGNHRELSLRCRKNIYCWYLNCRRHPNKLAAFLADPTTRLETNGDGELIPQRRERYVFRPILIRMLESFFTQTPFPDLPRRVEIANACNHVLKMDKKGVGLMPKEVVSPQVVSNWFANKRKELRRRSAEASAASTSSASSSASSTANHDSVSVSSMSPRDEETSSRNTTPETAISPSPAVSTFEVSRPSAIISATSSTTSPISIPATIIPSVSPSALELFAMAQQLGVQLPVPFPTLPTHFFPFQMAPFYGNPASILKSE.

The HNF-p1 domain occupies 1 to 30 (MLFTIEQLELIKKLQHTGMSSDQLLKAFGE). The POU-specific atypical domain occupies 103–199 (SQRTPMKEIT…PNKLAAFLAD (97 aa)). The homeobox DNA-binding region spans 215 to 291 (QRRERYVFRP…NKRKELRRRS (77 aa)). Residues 291–345 (SAEASAASTSSASSSASSTANHDSVSVSSMSPRDEETSSRNTTPETAISPSPAVS) form a disordered region. Residues 293-310 (EASAASTSSASSSASSTA) are compositionally biased toward low complexity. 2 stretches are compositionally biased toward polar residues: residues 311-321 (NHDSVSVSSMS) and 329-345 (SRNT…PAVS).

This sequence belongs to the HMBOX1 homeobox family. In terms of tissue distribution, expressed in both AWC neurons. Also expressed in the FLP mechanosensory neurons.

The protein resides in the nucleus. Transcriptional repressor which maintains cell fate asymmetry of AWC neurons in adults by repressing the expression of multiple AWC (OFF) genes, including srsx-3 in the AWC (ON) neuron. The polypeptide is Homeobox-containing protein 1 (Caenorhabditis elegans).